A 415-amino-acid polypeptide reads, in one-letter code: Glutamyl-tRNA reductase (415 aa).

Substrate-binding positions include 49-52 (TCNR), S104, 109-111 (EPQ), and Q115. C50 (nucleophile) is an active-site residue. Residue 184–189 (GAGEMI) participates in NADP(+) binding.

It belongs to the glutamyl-tRNA reductase family. Homodimer.

It carries out the reaction (S)-4-amino-5-oxopentanoate + tRNA(Glu) + NADP(+) = L-glutamyl-tRNA(Glu) + NADPH + H(+). The protein operates within porphyrin-containing compound metabolism; protoporphyrin-IX biosynthesis; 5-aminolevulinate from L-glutamyl-tRNA(Glu): step 1/2. Catalyzes the NADPH-dependent reduction of glutamyl-tRNA(Glu) to glutamate 1-semialdehyde (GSA). This is Glutamyl-tRNA reductase from Neisseria gonorrhoeae (strain ATCC 700825 / FA 1090).